The following is a 383-amino-acid chain: Protein delta homolog 2 (383 aa).

An N-terminal signal peptide occupies residues 1–26 (MPSGCRCLHLVCLLCILAAPVKPVRA). EGF-like domains follow at residues 27-58 (DDCSSHCDLAHGCCAPDGSCRCDPGWEGLHCE), 62-89 (RMPGCQHGTCHQPWQCICHSGWAGKFCD), 91-129 (DEHVCTTQSPCRNGGQCIYDGGGEYHCVCPPGFHGRDCE), and 131-172 (KEGP…AHCE). At 27-306 (DDCSSHCDLA…RQEAGLGKSS (280 aa)) the chain is on the extracellular side. Intrachain disulfides connect Cys-29-Cys-40, Cys-33-Cys-46, Cys-48-Cys-57, Cys-66-Cys-71, Cys-79-Cys-88, Cys-95-Cys-107, Cys-101-Cys-117, Cys-119-Cys-128, Cys-135-Cys-148, Cys-142-Cys-160, Cys-162-Cys-171, Cys-178-Cys-189, Cys-183-Cys-198, Cys-200-Cys-209, Cys-216-Cys-227, Cys-221-Cys-236, and Cys-238-Cys-247. Asn-157 carries an N-linked (GlcNAc...) asparagine glycan. In terms of domain architecture, EGF-like 5; calcium-binding spans 174–210 (NVDDCLMRPCANGATCLDGINRFSCLCPEGFAGRFCT). Residues 212–248 (NLDDCASRPCQRGARCRDRVHDFDCLCPSGYGGKTCE) form the EGF-like 6; calcium-binding domain. A helical membrane pass occupies residues 307–327 (LVAVVVFGAVTATLVLSTVLL). Over 328–383 (TLRAWRRGVCPPGPCCYPAPHYAPARQDQECQVSMLPAGLPLPPDLPPEPGKTTAL) the chain is Cytoplasmic.

It is found in the membrane. Regulates adipogenesis. The sequence is that of Protein delta homolog 2 (DLK2) from Sus scrofa (Pig).